The primary structure comprises 190 residues: Large ribosomal subunit protein uL6 (190 aa).

It belongs to the universal ribosomal protein uL6 family.

The protein is Large ribosomal subunit protein uL6 (RpL9) of Drosophila melanogaster (Fruit fly).